The following is a 268-amino-acid chain: NH(3)-dependent NAD(+) synthetase (268 aa).

Position 46–53 (46–53 (GVSGGQDS)) interacts with ATP. Asp-52 is a binding site for Mg(2+). Arg-140 lines the deamido-NAD(+) pocket. Position 160 (Thr-160) interacts with ATP. Glu-165 contributes to the Mg(2+) binding site. Deamido-NAD(+) contacts are provided by Lys-173 and Asp-180. Lys-189 contacts ATP. Residue 260 to 261 (HK) coordinates deamido-NAD(+).

Belongs to the NAD synthetase family. Homodimer.

The catalysed reaction is deamido-NAD(+) + NH4(+) + ATP = AMP + diphosphate + NAD(+) + H(+). It functions in the pathway cofactor biosynthesis; NAD(+) biosynthesis; NAD(+) from deamido-NAD(+) (ammonia route): step 1/1. In terms of biological role, catalyzes the ATP-dependent amidation of deamido-NAD to form NAD. Uses ammonia as a nitrogen source. This Buchnera aphidicola subsp. Acyrthosiphon pisum (strain APS) (Acyrthosiphon pisum symbiotic bacterium) protein is NH(3)-dependent NAD(+) synthetase.